The sequence spans 193 residues: MGSSFFGRPKMGGSSSSSPTSSSSSPAKRGKNKNGSDKPKQPQRGLGVAQLEKIRLHGEYNCNSFNTYPSYHPSTYQEDVRIQGGYPSIPSSSPSFSYASSSPPPAPYGFHPNMMMNANNDQYERTTIRYGDSQPHRAPSWNPSYGILESQHFVEPNTTRHFLHEDQRNISLGSGIQNFETSEANELDLELRL.

Disordered regions lie at residues 1-50 (MGSS…GVAQ) and 85-104 (GYPS…SSPP). The span at 14 to 26 (SSSSSPTSSSSSP) shows a compositional bias: low complexity. The SPL motif lies at 44 to 52 (RGLGVAQLE). A compositionally biased stretch (low complexity) spans 86–101 (YPSIPSSSPSFSYASS). The EAR signature appears at 187–193 (LDLELRL).

Interacts with TPL and the TPR corepressors TPR1, TPR2, TPR3, TPR4, and with the TCP transcription factors TCP2, TCP3, TCP4, TCP5, TCP10, TCP13, TCP17 and TCP24. Interacts with SPL and SPEAR2. In terms of tissue distribution, expressed in shoot apical meristem, cotyledons and leaves. Detected at the leaf margins and in the vascular bundles at the base of the leaves.

The protein localises to the nucleus. Functionally, transcriptional regulator of leaf development. Acts as an adapter-like transcriptional repressor recruiting TPL/TPR corepressors to inhibit the CIN-like TCP transcription factors. This chain is Protein SPEAR3, found in Arabidopsis thaliana (Mouse-ear cress).